A 269-amino-acid polypeptide reads, in one-letter code: MNSPLEAARAAAIHAARAARARYRAGVVEPTAGRAPGMTQANMIALPREWAWDFLLYAQRNPKPCPVLDVIEAGSHATVLAEGADLRTDIPLYRVWRDGRLAGEVSDATALWAGQPDLVTFLIGCSFTFETPLQEAGIEVRHIAQGCNVPMYRTQRMRRPAGRLRGELVVSMRPVPADRVADAVSISGRFPSVHGAPVHVGDPAALGIADLARPDFGDPVEIHPGEVPVFWACGVTPQAAVMASGVPFAVTHAPGHMFITDVPDSTYHV.

This sequence belongs to the D-glutamate cyclase family.

The protein is Putative hydro-lyase Aave_3512 of Paracidovorax citrulli (strain AAC00-1) (Acidovorax citrulli).